Here is a 330-residue protein sequence, read N- to C-terminus: Ferrochelatase (330 aa).

Fe cation is bound by residues histidine 200 and glutamate 281.

The protein belongs to the ferrochelatase family.

Its subcellular location is the cytoplasm. The catalysed reaction is heme b + 2 H(+) = protoporphyrin IX + Fe(2+). The protein operates within porphyrin-containing compound metabolism; protoheme biosynthesis; protoheme from protoporphyrin-IX: step 1/1. Catalyzes the ferrous insertion into protoporphyrin IX. The chain is Ferrochelatase from Marinomonas sp. (strain MWYL1).